We begin with the raw amino-acid sequence, 563 residues long: Coiled-coil domain-containing protein 38 (563 aa).

A coiled-coil region spans residues 128–211; the sequence is TKKKTIKRFE…SIKSDIAKTE (84 aa). The segment at 265–310 is disordered; that stretch reads DNSIDSDKMSVSEEWSSRRGSQGGRHGKHTLGQDSRKSSGFTRPES. Over residues 269-281 the composition is skewed to basic and acidic residues; it reads DSDKMSVSEEWSS. Coiled-coil stretches lie at residues 361–415 and 454–522; these read QDVD…RSRL and NAVQ…AVAQ. A disordered region spans residues 543–563; that stretch reads QELLLVSDTRSKSQDEEYFFS.

Interacts with CCDC42, CFAP53, IFT88 and ODF2. Interacts with CCDC146. Interacts with TEKT3. Interacts with ubiquitinated histone H2A. In terms of tissue distribution, expressed exclusively in testis where it is detected mainly in spermatogonia and spermatocytes (at protein level).

Its subcellular location is the cytoplasm. It is found in the cytoskeleton. It localises to the microtubule organizing center. The protein resides in the centrosome. The protein localises to the perinuclear region. Its subcellular location is the cell projection. It is found in the cilium. It localises to the flagellum. In terms of biological role, essential for male fertility. Required for sperm flagellum biogenesis. Also required for acrosome biogenesis. Required for the attachment of developing acrosomes to the nucleus during spermiogenesis and may be involved in the transport of fibrous sheath components. This Mus musculus (Mouse) protein is Coiled-coil domain-containing protein 38 (Ccdc38).